The following is a 136-amino-acid chain: Large ribosomal subunit protein bL12 (136 aa).

This sequence belongs to the bacterial ribosomal protein bL12 family. Homodimer. Part of the ribosomal stalk of the 50S ribosomal subunit. Forms a multimeric L10(L12)X complex, where L10 forms an elongated spine to which 2 to 4 L12 dimers bind in a sequential fashion. Binds GTP-bound translation factors.

Functionally, forms part of the ribosomal stalk which helps the ribosome interact with GTP-bound translation factors. Is thus essential for accurate translation. This Synechococcus sp. (strain JA-2-3B'a(2-13)) (Cyanobacteria bacterium Yellowstone B-Prime) protein is Large ribosomal subunit protein bL12.